Reading from the N-terminus, the 105-residue chain is Phosphoribosyl-ATP pyrophosphatase (105 aa).

The protein belongs to the PRA-PH family.

Its subcellular location is the cytoplasm. The catalysed reaction is 1-(5-phospho-beta-D-ribosyl)-ATP + H2O = 1-(5-phospho-beta-D-ribosyl)-5'-AMP + diphosphate + H(+). It functions in the pathway amino-acid biosynthesis; L-histidine biosynthesis; L-histidine from 5-phospho-alpha-D-ribose 1-diphosphate: step 2/9. The protein is Phosphoribosyl-ATP pyrophosphatase of Methylococcus capsulatus (strain ATCC 33009 / NCIMB 11132 / Bath).